The sequence spans 254 residues: Imidazole glycerol phosphate synthase subunit HisF (254 aa).

Residues Asp-11 and Asp-130 contribute to the active site.

Belongs to the HisA/HisF family. In terms of assembly, heterodimer of HisH and HisF.

The protein localises to the cytoplasm. It catalyses the reaction 5-[(5-phospho-1-deoxy-D-ribulos-1-ylimino)methylamino]-1-(5-phospho-beta-D-ribosyl)imidazole-4-carboxamide + L-glutamine = D-erythro-1-(imidazol-4-yl)glycerol 3-phosphate + 5-amino-1-(5-phospho-beta-D-ribosyl)imidazole-4-carboxamide + L-glutamate + H(+). It functions in the pathway amino-acid biosynthesis; L-histidine biosynthesis; L-histidine from 5-phospho-alpha-D-ribose 1-diphosphate: step 5/9. Functionally, IGPS catalyzes the conversion of PRFAR and glutamine to IGP, AICAR and glutamate. The HisF subunit catalyzes the cyclization activity that produces IGP and AICAR from PRFAR using the ammonia provided by the HisH subunit. The chain is Imidazole glycerol phosphate synthase subunit HisF from Staphylococcus carnosus (strain TM300).